The primary structure comprises 902 residues: HTH-type transcriptional regulator MalT (902 aa).

39-46 (SPAGYGKT) is an ATP binding site. Residues 830 to 895 (ELIRTSPLTQ…DAVQHAQQLL (66 aa)) form the HTH luxR-type domain. Positions 854–873 (NEQIAGELAVAATTIKTHIR) form a DNA-binding region, H-T-H motif.

The protein belongs to the MalT family. Monomer in solution. Oligomerizes to an active state in the presence of the positive effectors ATP and maltotriose.

Its activity is regulated as follows. Activated by ATP and maltotriose, which are both required for DNA binding. In terms of biological role, positively regulates the transcription of the maltose regulon whose gene products are responsible for uptake and catabolism of malto-oligosaccharides. Specifically binds to the promoter region of its target genes, recognizing a short DNA motif called the MalT box. This chain is HTH-type transcriptional regulator MalT, found in Salmonella dublin (strain CT_02021853).